Reading from the N-terminus, the 286-residue chain is Neuferricin homolog (286 aa).

The signal sequence occupies residues 1–23; it reads MFGFVKYLFKLQFLFILAAVLAG. Residues 61–145 enclose the Cytochrome b5 heme-binding domain; it reads ATVLTSAELS…KPNDLLGLAN (85 aa). The stretch at 176–200 forms a coiled coil; that stretch reads HKYLALLEQAQIAKAEVDELRSKYP.

This sequence belongs to the cytochrome b5 family. MAPR subfamily.

It is found in the secreted. In terms of biological role, heme-binding protein. The protein is Neuferricin homolog of Drosophila pseudoobscura pseudoobscura (Fruit fly).